Reading from the N-terminus, the 502-residue chain is Lysine--tRNA ligase (502 aa).

Mg(2+) contacts are provided by glutamate 412 and glutamate 419.

The protein belongs to the class-II aminoacyl-tRNA synthetase family. Homodimer. Requires Mg(2+) as cofactor.

It is found in the cytoplasm. The catalysed reaction is tRNA(Lys) + L-lysine + ATP = L-lysyl-tRNA(Lys) + AMP + diphosphate. This chain is Lysine--tRNA ligase, found in Nitrosomonas europaea (strain ATCC 19718 / CIP 103999 / KCTC 2705 / NBRC 14298).